A 431-amino-acid chain; its full sequence is Guanine nucleotide exchange factor rei-2 (431 aa).

Positions 1 to 21 are enriched in polar residues; that stretch reads MDETATSSEVTETFVSDPTTR. The segment at 1–28 is disordered; it reads MDETATSSEVTETFVSDPTTRQFEEDGH. Coiled coils occupy residues 149-171 and 214-247; these read EVLN…AESL and LEAQ…RISE. The disordered stretch occupies residues 249-298; that stretch reads IHEERSTGSLESAVSSDQEDQKSDFKSSESLPGNPPPYAPTAPPPYEDKY. Residues 255 to 264 are compositionally biased toward polar residues; the sequence is TGSLESAVSS. Residues 281 to 293 show a composition bias toward pro residues; it reads GNPPPYAPTAPPP.

This sequence belongs to the SH3BP5 family. As to quaternary structure, interacts with rab-11.1. Binds preferentially to the GDP-bound form of rab-11.1.

Its function is as follows. Guanine nucleotide exchange factor for Rab GTPase Rab-11.1. May spatially and temporally regulate the distribution of Rab-11.1 to target membranes during embryogenesis. May play a role in cytokinesis, probably by targeting rab-11.1 to the cleavage furrows. The sequence is that of Guanine nucleotide exchange factor rei-2 from Caenorhabditis elegans.